The primary structure comprises 356 residues: Uroporphyrinogen decarboxylase (356 aa).

Positions 33, 35, 37, 46, 82, 159, 214, and 334 each coordinate coproporphyrinogen I. The coproporphyrinogen III site is built by Arg33, Ala35, and Arg37. Residues Asp82, Tyr159, Ser214, and His334 each contribute to the coproporphyrinogen III site.

It belongs to the uroporphyrinogen decarboxylase family. As to quaternary structure, homodimer.

It localises to the cytoplasm. The protein resides in the cytosol. The enzyme catalyses uroporphyrinogen III + 4 H(+) = coproporphyrinogen III + 4 CO2. The protein operates within porphyrin-containing compound metabolism; protoporphyrin-IX biosynthesis; coproporphyrinogen-III from 5-aminolevulinate: step 4/4. Functionally, catalyzes the decarboxylation of four acetate groups of uroporphyrinogen-III to yield coproporphyrinogen-III. In Drosophila melanogaster (Fruit fly), this protein is Uroporphyrinogen decarboxylase.